Here is a 427-residue protein sequence, read N- to C-terminus: Sensor histidine kinase ArsS (427 aa).

2 consecutive transmembrane segments (helical) span residues 3–23 (FSIFFKVVALFMITLFSFGAF) and 131–151 (NYFLAITVGLLLILFLFLFVL). An HAMP domain is found at 151-203 (LQSLLPLRELRSQVKPFAQGDKSVSCKSKQKDEIGDLANEFDNCILKINAMNE). A Histidine kinase domain is found at 211-398 (SIMHELRTPI…LSYHYSNGRI (188 aa)). A Phosphohistidine; by autocatalysis modification is found at histidine 214.

Post-translationally, autophosphorylated.

The protein resides in the membrane. The catalysed reaction is ATP + protein L-histidine = ADP + protein N-phospho-L-histidine.. Member of the two-component regulatory system ArsS/ArsR that regulates genes involved in biofilm formation and acid adaptation by acting on major ammonia-producing pathways. Functions as a sensor protein kinase which is autophosphorylated at a histidine residue and transfers its phosphate group to the conserved aspartic acid residue in the regulatory domain of ArsR. In turn, ArsR binds to the upstream promoter regions of target genes including ureA, amiE and amiF to positively regulate their expression in response to acidic pH. Also participates in acidic acclimatation in a phosphorylation-independent pathway by regulating acid-induced trafficking of urease and its accessory proteins to the inner membrane. This chain is Sensor histidine kinase ArsS, found in Helicobacter pylori (strain ATCC 700392 / 26695) (Campylobacter pylori).